The following is a 463-amino-acid chain: NADH-quinone oxidoreductase subunit N (463 aa).

A run of 14 helical transmembrane segments spans residues 2 to 22 (NTLI…ILNF), 25 to 45 (GIVP…FYEF), 61 to 81 (FSTA…ALSH), 91 to 110 (ISDF…AMVS), 114 to 133 (LAMF…VLAA), 149 to 169 (FLMG…IYGA), 189 to 209 (IWFP…IAAV), 223 to 243 (PALT…ATLF), 264 to 284 (FTNV…IMAL), 292 to 312 (MLAF…LTIA), 317 to 337 (VLLY…SVIL), 362 to 382 (AAIL…SGFF), 395 to 415 (GYVA…GYYF), and 434 to 454 (PFLI…LGLF).

This sequence belongs to the complex I subunit 2 family. In terms of assembly, NDH-1 is composed of 14 different subunits. Subunits NuoA, H, J, K, L, M, N constitute the membrane sector of the complex.

It localises to the cell inner membrane. The enzyme catalyses a quinone + NADH + 5 H(+)(in) = a quinol + NAD(+) + 4 H(+)(out). Its function is as follows. NDH-1 shuttles electrons from NADH, via FMN and iron-sulfur (Fe-S) centers, to quinones in the respiratory chain. The immediate electron acceptor for the enzyme in this species is believed to be a menaquinone. Couples the redox reaction to proton translocation (for every two electrons transferred, four hydrogen ions are translocated across the cytoplasmic membrane), and thus conserves the redox energy in a proton gradient. This Flavobacterium johnsoniae (strain ATCC 17061 / DSM 2064 / JCM 8514 / BCRC 14874 / CCUG 350202 / NBRC 14942 / NCIMB 11054 / UW101) (Cytophaga johnsonae) protein is NADH-quinone oxidoreductase subunit N.